We begin with the raw amino-acid sequence, 171 residues long: MDLKKKIREVPDFPREGINYKDISTLLLDGEAYRQAVQELARQCRYKAADLIVCPKLRGLVIGAPLSYILGTGLAVLQRPVRLPGDALSWQGMALGEDSFYLSREAVKPEMKVLVADELLATGGTAFTAIKMIEELGGEVVGTVFLIELTGLGGRAKLNDYDTISLVQYNF.

It belongs to the purine/pyrimidine phosphoribosyltransferase family. In terms of assembly, homodimer.

Its subcellular location is the cytoplasm. The enzyme catalyses AMP + diphosphate = 5-phospho-alpha-D-ribose 1-diphosphate + adenine. Its pathway is purine metabolism; AMP biosynthesis via salvage pathway; AMP from adenine: step 1/1. In terms of biological role, catalyzes a salvage reaction resulting in the formation of AMP, that is energically less costly than de novo synthesis. The protein is Adenine phosphoribosyltransferase of Pelotomaculum thermopropionicum (strain DSM 13744 / JCM 10971 / SI).